The chain runs to 346 residues: Aspartate-semialdehyde dehydrogenase (346 aa).

NADP(+)-binding positions include 12–15 (SGAV) and 40–41 (RS). Arg-101 provides a ligand contact to phosphate. Cys-131 acts as the Acyl-thioester intermediate in catalysis. Gln-158 contributes to the substrate binding site. Residue 161–162 (SG) participates in NADP(+) binding. A phosphate-binding site is contributed by Lys-225. Position 246 (Arg-246) interacts with substrate. The active-site Proton acceptor is the His-253. Gln-326 provides a ligand contact to NADP(+).

The protein belongs to the aspartate-semialdehyde dehydrogenase family. Homodimer.

It carries out the reaction L-aspartate 4-semialdehyde + phosphate + NADP(+) = 4-phospho-L-aspartate + NADPH + H(+). It functions in the pathway amino-acid biosynthesis; L-lysine biosynthesis via DAP pathway; (S)-tetrahydrodipicolinate from L-aspartate: step 2/4. Its pathway is amino-acid biosynthesis; L-methionine biosynthesis via de novo pathway; L-homoserine from L-aspartate: step 2/3. It participates in amino-acid biosynthesis; L-threonine biosynthesis; L-threonine from L-aspartate: step 2/5. Functionally, catalyzes the NADPH-dependent formation of L-aspartate-semialdehyde (L-ASA) by the reductive dephosphorylation of L-aspartyl-4-phosphate. In Helicobacter pylori (strain ATCC 700392 / 26695) (Campylobacter pylori), this protein is Aspartate-semialdehyde dehydrogenase.